The following is a 734-amino-acid chain: DNA replication licensing factor MCM5 (734 aa).

Ser2 carries the post-translational modification N-acetylserine. In terms of domain architecture, MCM spans 331-537 (IYELISKSIA…RDVMLAKHVI (207 aa)). Residue Arg371 participates in ADP binding. An N6-acetyllysine mark is found at Lys392 and Lys396. The Arginine finger motif lies at 512 to 515 (SRFD). At Ser605 the chain carries Phosphoserine.

Belongs to the MCM family. As to quaternary structure, component of the MCM2-7 complex. The complex forms a toroidal hexameric ring with the proposed subunit order MCM2-MCM6-MCM4-MCM7-MCM3-MCM5. Component of the CMG helicase complex, a hexameric ring of related MCM2-7 subunits stabilized by CDC45 and the tetrameric GINS complex. Interacts with ANKRD17. Interacts with MCMBP. Interacts with TONSL; the interaction is direct.

The protein localises to the nucleus. It localises to the chromosome. It is found in the cytoplasm. Its subcellular location is the cytosol. The catalysed reaction is ATP + H2O = ADP + phosphate + H(+). Its function is as follows. Acts as a component of the MCM2-7 complex (MCM complex) which is the replicative helicase essential for 'once per cell cycle' DNA replication initiation and elongation in eukaryotic cells. Core component of CDC45-MCM-GINS (CMG) helicase, the molecular machine that unwinds template DNA during replication, and around which the replisome is built. The active ATPase sites in the MCM2-7 ring are formed through the interaction surfaces of two neighboring subunits such that a critical structure of a conserved arginine finger motif is provided in trans relative to the ATP-binding site of the Walker A box of the adjacent subunit. The six ATPase active sites, however, are likely to contribute differentially to the complex helicase activity. In Bos taurus (Bovine), this protein is DNA replication licensing factor MCM5.